The chain runs to 235 residues: Ion-translocating oxidoreductase complex subunit E (235 aa).

5 consecutive transmembrane segments (helical) span residues 63–83 (LGLGLATMLVLTCTNTVISLF), 93–113 (IPIYVMIIATTVTAVQLLMNA), 117–137 (TLYQSLGIFIPLIVTNCIIIG), 152–172 (IWDGFSMGLGMALSLTILGAL), and 206–226 (SFLLFILPPGAFIGLGLLLAI).

This sequence belongs to the NqrDE/RnfAE family. The complex is composed of six subunits: RnfA, RnfB, RnfC, RnfD, RnfE and RnfG.

Its subcellular location is the cell inner membrane. Its function is as follows. Part of a membrane-bound complex that couples electron transfer with translocation of ions across the membrane. This is Ion-translocating oxidoreductase complex subunit E from Haemophilus influenzae (strain ATCC 51907 / DSM 11121 / KW20 / Rd).